The sequence spans 486 residues: Pentatricopeptide repeat-containing protein At2g01860 (486 aa).

The segment at 111 to 137 (QKPDKPSRVRPLPLPQPHKLRPLGLPT) is disordered. PPR repeat units lie at residues 290-321 (DSSVYVKMILEIAKNPDKYHLVVALLEELKKR), 327-361 (SQQDCTSIMKICVKLGEFELVESLFDWFKASNREP), 362-396 (SVVMYTTMIHSRYSEQKYREAMSVVWEMEESNCLL), 397-431 (DLPAYRVVIKLFVALDDLGRAMRYYSKLKEAGFSP), and 432-466 (TYDIYRDMISVYTASGRLTKCKEICKEVEDAGLRL).

The protein belongs to the PPR family. P subfamily.

This chain is Pentatricopeptide repeat-containing protein At2g01860 (EMB975), found in Arabidopsis thaliana (Mouse-ear cress).